Here is a 428-residue protein sequence, read N- to C-terminus: Histidine--tRNA ligase (428 aa).

Belongs to the class-II aminoacyl-tRNA synthetase family. Homodimer.

Its subcellular location is the cytoplasm. It carries out the reaction tRNA(His) + L-histidine + ATP = L-histidyl-tRNA(His) + AMP + diphosphate + H(+). The protein is Histidine--tRNA ligase of Chlamydia trachomatis serovar L2 (strain ATCC VR-902B / DSM 19102 / 434/Bu).